The sequence spans 728 residues: E3 ubiquitin-protein ligase TRIM36 (728 aa).

Residues 33-84 form an RING-type; degenerate zinc finger; the sequence is CPACKELFTHPLILPCQHSICHKCVKELLLTLDDSFNDVGSDNSNQSSPRLR. 2 consecutive B box-type zinc fingers follow at residues 154 to 192 and 207 to 249; these read AIMC…WGTI and PKIL…VTTM. C212, H215, C235, and H241 together coordinate Zn(2+). Positions 271–345 form a coiled coil; it reads ESQVKSQISE…MEEYQGLLEN (75 aa). The COS domain maps to 356–413; the sequence is LKETDQSCFVQTAKQLHLRIQKATESLKSFRPAAQTSFEDYVVNTSKQTELLGELSFF. The Fibronectin type-III domain occupies 419–510; sequence VPEINEEQSK…RELILHTPPA (92 aa). Positions 508-720 constitute a B30.2/SPRY domain; sequence PPAPVFSFLF…IQLEEPITAK (213 aa).

It belongs to the TRIM/RBCC family. As to quaternary structure, interacts with CENPH. As to expression, highly expressed in testis, prostate and brain. Weakly expressed in kidney, lung and heart. Expressed in fetal tissues.

The protein resides in the cytoplasm. It localises to the cytoplasmic vesicle. It is found in the secretory vesicle. The protein localises to the acrosome. Its subcellular location is the cytoskeleton. The catalysed reaction is S-ubiquitinyl-[E2 ubiquitin-conjugating enzyme]-L-cysteine + [acceptor protein]-L-lysine = [E2 ubiquitin-conjugating enzyme]-L-cysteine + N(6)-ubiquitinyl-[acceptor protein]-L-lysine.. In terms of biological role, E3 ubiquitin-protein ligase which mediates ubiquitination and subsequent proteasomal degradation of target proteins. Involved in chromosome segregation and cell cycle regulation. May play a role in the acrosome reaction and fertilization. This Homo sapiens (Human) protein is E3 ubiquitin-protein ligase TRIM36 (TRIM36).